A 126-amino-acid chain; its full sequence is Large ribosomal subunit protein bL12 (126 aa).

It belongs to the bacterial ribosomal protein bL12 family. In terms of assembly, homodimer. Part of the ribosomal stalk of the 50S ribosomal subunit. Forms a multimeric L10(L12)X complex, where L10 forms an elongated spine to which 2 to 4 L12 dimers bind in a sequential fashion. Binds GTP-bound translation factors.

Forms part of the ribosomal stalk which helps the ribosome interact with GTP-bound translation factors. Is thus essential for accurate translation. The protein is Large ribosomal subunit protein bL12 of Desulforudis audaxviator (strain MP104C).